Consider the following 577-residue polypeptide: Arginine--tRNA ligase (577 aa).

Positions 122–132 (PNVAKEMHVGH) match the 'HIGH' region motif.

The protein belongs to the class-I aminoacyl-tRNA synthetase family. Monomer.

Its subcellular location is the cytoplasm. The enzyme catalyses tRNA(Arg) + L-arginine + ATP = L-arginyl-tRNA(Arg) + AMP + diphosphate. The sequence is that of Arginine--tRNA ligase from Escherichia coli (strain ATCC 8739 / DSM 1576 / NBRC 3972 / NCIMB 8545 / WDCM 00012 / Crooks).